Consider the following 837-residue polypeptide: MSLSHLYRDGEGRIDDDDDERENFEITDWDLQNEFNPNRQRHWQTKEEATYGVWAERDSDDERPSFGGKRARDYSAPVNFISAGLKKGAAEEAELEDSDDEERPVKQDDFPKDFGPRKLKTGGNFKPSQKGFAGGTKSFMDFGSWERHTKGIGQKLLQKMGYVPGRGLGKNAQGIINPIEAKQRKGKGAVGAYGSERTTQSMQDFPVVDSEEEAEEEFQKGLSQWRKDPSGSKKKPKYSYKTVEELKAKGRISKKLTAPQKELSQVKVIDMTGREQKVYYSYSQISHKHNVPDDGLPLQSQQLPQSGKEAKAPGFALPELEHNLQLLIDLTEQEIIQNDRQLQYERDMVVNLFHELEKMTEVLDHEERVISNLSKVLEMVEECERRMQPDCSNPLTLDECARIFETLQDKYYEEYRMSDRVDLAVAIVYPLMKEYFKEWDPLKDCTYGTEIISKWKSLLENDQLLSHGGQDLSADAFHRLIWEVWMPFVRNIVTQWQPRNCDPMVDFLDSWVHIIPVWILDNILDQLIFPKLQKEVENWNPLTDTVPIHSWIHPWLPLMQARLEPLYSPIRSKLSSALQKWHPSDSSAKLILQPWKDVFTPGSWEAFMVKNIVPKLGMCLGELVINPHQQHMDAFYWVIDWEGMISVSSLVGLLEKHFFPKWLQVLCSWLSNSPNYEEITKWYLGWKSMFSDQVLAHPSVKDKFNEALDIMNRAVSSNVGAYMQPGARENIAYLTHTERRKDFQYEATRERREAENMAQRGIGVAASSVPMNFKDLIETKAEEHNIVFMPVIGKRHEGKQLYTFGRIVIYIDRGVVFVQGEKTWVPTSLQSLIDMAK.

Composition is skewed to basic and acidic residues over residues 1-13 and 53-64; these read MSLS…GEGR and VWAERDSDDERP. Disordered stretches follow at residues 1–21, 53–72, and 85–133; these read MSLS…DDER, VWAE…KRAR, and LKKG…KGFA. Phosphoserine is present on residues serine 2, serine 59, and serine 98. A compositionally biased stretch (acidic residues) spans 91–102; the sequence is EEAELEDSDDEE. Positions 103–116 are enriched in basic and acidic residues; the sequence is RPVKQDDFPKDFGP. A Phosphoserine modification is found at serine 144. The G-patch domain occupies 149–195; that stretch reads TKGIGQKLLQKMGYVPGRGLGKNAQGIINPIEAKQRKGKGAVGAYGS. The interval 179-236 is disordered; it reads IEAKQRKGKGAVGAYGSERTTQSMQDFPVVDSEEEAEEEFQKGLSQWRKDPSGSKKKP. Residue serine 210 is modified to Phosphoserine. Residues 700–705 carry the Nuclear localization signal motif; that stretch reads VKDKFN. A required for nuclear speckle localization region spans residues 710–734; the sequence is IMNRAVSSNVGAYMQPGARENIAYL.

The protein belongs to the TFP11/STIP family. Identified in the spliceosome C complex. Found in the Intron Large (IL) complex, a post-mRNA release spliceosomal complex containing the excised intron, U2, U5 and U6 snRNPs, and splicing factors. Interacts with TUFT1. Interacts with DHX15; indicative for a recruitment of DHX15 to the IL complex. Interacts with GCFC2.

It localises to the cytoplasm. The protein resides in the nucleus. Functionally, involved in pre-mRNA splicing, specifically in spliceosome disassembly during late-stage splicing events. Intron turnover seems to proceed through reactions in two lariat-intron associated complexes termed Intron Large (IL) and Intron Small (IS). In cooperation with DHX15 seems to mediate the transition of the U2, U5 and U6 snRNP-containing IL complex to the snRNP-free IS complex leading to efficient debranching and turnover of excised introns. May play a role in the differentiation of ameloblasts and odontoblasts or in the forming of the enamel extracellular matrix. This Macaca fascicularis (Crab-eating macaque) protein is Tuftelin-interacting protein 11 (TFIP11).